Consider the following 401-residue polypeptide: Elongation factor Tu (401 aa).

Residues 10–211 (KPHLNVGTIG…ALDTFVPNPK (202 aa)) form the tr-type G domain. A G1 region spans residues 19–26 (GHVDHGKT). 19 to 26 (GHVDHGKT) is a binding site for GTP. Residue Thr26 participates in Mg(2+) binding. The G2 stretch occupies residues 62–66 (GITIA). The interval 83–86 (DCPG) is G3. Residues 83–87 (DCPGH) and 138–141 (NKAD) contribute to the GTP site. The tract at residues 138–141 (NKAD) is G4. The interval 179-181 (SAV) is G5.

Belongs to the TRAFAC class translation factor GTPase superfamily. Classic translation factor GTPase family. EF-Tu/EF-1A subfamily. Monomer.

Its subcellular location is the cytoplasm. The enzyme catalyses GTP + H2O = GDP + phosphate + H(+). In terms of biological role, GTP hydrolase that promotes the GTP-dependent binding of aminoacyl-tRNA to the A-site of ribosomes during protein biosynthesis. The chain is Elongation factor Tu from Leptospira interrogans serogroup Icterohaemorrhagiae serovar copenhageni (strain Fiocruz L1-130).